A 321-amino-acid polypeptide reads, in one-letter code: Glutaminase (321 aa).

Substrate is bound by residues Ser69, Asn120, Glu165, Asn172, Tyr196, Tyr248, and Val266.

Belongs to the glutaminase family. As to quaternary structure, homotetramer.

The enzyme catalyses L-glutamine + H2O = L-glutamate + NH4(+). This chain is Glutaminase, found in Parabacteroides distasonis (strain ATCC 8503 / DSM 20701 / CIP 104284 / JCM 5825 / NCTC 11152).